The following is a 350-amino-acid chain: Nicotinate-nucleotide--dimethylbenzimidazole phosphoribosyltransferase (350 aa).

Glu316 serves as the catalytic Proton acceptor.

Belongs to the CobT family.

It catalyses the reaction 5,6-dimethylbenzimidazole + nicotinate beta-D-ribonucleotide = alpha-ribazole 5'-phosphate + nicotinate + H(+). Its pathway is nucleoside biosynthesis; alpha-ribazole biosynthesis; alpha-ribazole from 5,6-dimethylbenzimidazole: step 1/2. Its function is as follows. Catalyzes the synthesis of alpha-ribazole-5'-phosphate from nicotinate mononucleotide (NAMN) and 5,6-dimethylbenzimidazole (DMB). In Pseudomonas syringae pv. tomato (strain ATCC BAA-871 / DC3000), this protein is Nicotinate-nucleotide--dimethylbenzimidazole phosphoribosyltransferase.